The sequence spans 213 residues: MSRNSYIQQNSDIQAAGGLVPMVIEQSARGERAYDIYSRLLKERVIFMVGPVEDYMANLIAAQLLFLEAENPDKDIHLYINSPGGSVTAGMSIYDTMQFIKPDVSTICIGQACSMGAFLLAGGAEGKRHCLPNSRMMIHQPLGGFQGQASDIDIHAKEILHIRHRLNSLLAHHTGQSLETIERDTERDNFMSAERAAEYGLIDSVINKRQMPA.

Residue S114 is the Nucleophile of the active site. The active site involves H139.

It belongs to the peptidase S14 family. As to quaternary structure, fourteen ClpP subunits assemble into 2 heptameric rings which stack back to back to give a disk-like structure with a central cavity, resembling the structure of eukaryotic proteasomes.

The protein resides in the cytoplasm. The catalysed reaction is Hydrolysis of proteins to small peptides in the presence of ATP and magnesium. alpha-casein is the usual test substrate. In the absence of ATP, only oligopeptides shorter than five residues are hydrolyzed (such as succinyl-Leu-Tyr-|-NHMec, and Leu-Tyr-Leu-|-Tyr-Trp, in which cleavage of the -Tyr-|-Leu- and -Tyr-|-Trp bonds also occurs).. In terms of biological role, cleaves peptides in various proteins in a process that requires ATP hydrolysis. Has a chymotrypsin-like activity. Plays a major role in the degradation of misfolded proteins. The polypeptide is ATP-dependent Clp protease proteolytic subunit (Pseudomonas syringae pv. syringae (strain B728a)).